The chain runs to 207 residues: Probable molybdenum cofactor guanylyltransferase (207 aa).

Residues 9–11 (LAG), K21, and D97 contribute to the GTP site. D97 lines the Mg(2+) pocket.

This sequence belongs to the MobA family. The cofactor is Mg(2+).

The protein resides in the cytoplasm. The enzyme catalyses Mo-molybdopterin + GTP + H(+) = Mo-molybdopterin guanine dinucleotide + diphosphate. In terms of biological role, transfers a GMP moiety from GTP to Mo-molybdopterin (Mo-MPT) cofactor (Moco or molybdenum cofactor) to form Mo-molybdopterin guanine dinucleotide (Mo-MGD) cofactor. The protein is Probable molybdenum cofactor guanylyltransferase of Trichormus variabilis (strain ATCC 29413 / PCC 7937) (Anabaena variabilis).